A 247-amino-acid chain; its full sequence is UDP-2,3-diacylglucosamine hydrolase (247 aa).

5 residues coordinate Mn(2+): Asp-8, His-10, Asp-41, Asn-79, and His-115. 79–80 is a substrate binding site; sequence NH. Positions 123, 165, 168, and 196 each coordinate substrate. 2 residues coordinate Mn(2+): His-196 and His-198.

The protein belongs to the LpxH family. It depends on Mn(2+) as a cofactor.

It is found in the cell inner membrane. The catalysed reaction is UDP-2-N,3-O-bis[(3R)-3-hydroxytetradecanoyl]-alpha-D-glucosamine + H2O = 2-N,3-O-bis[(3R)-3-hydroxytetradecanoyl]-alpha-D-glucosaminyl 1-phosphate + UMP + 2 H(+). It participates in glycolipid biosynthesis; lipid IV(A) biosynthesis; lipid IV(A) from (3R)-3-hydroxytetradecanoyl-[acyl-carrier-protein] and UDP-N-acetyl-alpha-D-glucosamine: step 4/6. Its function is as follows. Hydrolyzes the pyrophosphate bond of UDP-2,3-diacylglucosamine to yield 2,3-diacylglucosamine 1-phosphate (lipid X) and UMP by catalyzing the attack of water at the alpha-P atom. Involved in the biosynthesis of lipid A, a phosphorylated glycolipid that anchors the lipopolysaccharide to the outer membrane of the cell. The polypeptide is UDP-2,3-diacylglucosamine hydrolase (Blochmanniella floridana).